A 312-amino-acid chain; its full sequence is Magnesium protoporphyrin IX methyltransferase, chloroplastic (312 aa).

Residues 1–39 (MPFAPSLLSSSSSVSQFLPRFPNATRFNVTPRSRAATVV) constitute a chloroplast transit peptide.

The protein belongs to the class I-like SAM-binding methyltransferase superfamily. Magnesium protoporphyrin O-methyltransferase family.

Its subcellular location is the plastid. It localises to the chloroplast membrane. The protein localises to the chloroplast thylakoid membrane. It catalyses the reaction Mg-protoporphyrin IX + S-adenosyl-L-methionine = Mg-protoporphyrin IX 13-monomethyl ester + S-adenosyl-L-homocysteine. The protein operates within porphyrin-containing compound metabolism; chlorophyll biosynthesis. With respect to regulation, regulated by the folate status via an increased concentration of S-adenosyl-homocysteine (AdoHcy), a potent inhibitor of most AdoMet-dependent methyltransferases. In terms of biological role, converts Mg-protoporphyrin IX to Mg-protoporphyrin IX methylester using S-adenosyl-L-methionine as a cofactor. Involved in chloroplast-to-nucleus signaling by acting as a negative effector of nuclear photosynthetic gene expression. This chain is Magnesium protoporphyrin IX methyltransferase, chloroplastic (CHLM), found in Arabidopsis thaliana (Mouse-ear cress).